A 471-amino-acid polypeptide reads, in one-letter code: NALCN channel auxiliary factor 2 (471 aa).

Residues 47 to 67 (LASLLFFTVLLADHLWLCAGA) form a helical membrane-spanning segment. The segment at 76-115 (SAMRPPWGAGRERQPVPPRAVLPPPPPSPGEPSASSGTCG) is disordered. Residues 90–105 (PVPPRAVLPPPPPSPG) are compositionally biased toward pro residues. Asn120 carries an N-linked (GlcNAc...) asparagine glycan. 2 disordered regions span residues 158-178 (EPTT…APEF) and 399-424 (HYHP…GGSR). Residues 161 to 171 (TPAPPLRPPDS) show a composition bias toward pro residues. The chain crosses the membrane as a helical span at residues 432 to 452 (LCVLVLILLHTVVSFSSSQSG).

It belongs to the NALF family.

Its subcellular location is the membrane. Its function is as follows. Probable component of the NALCN channel complex, a channel that regulates the resting membrane potential and controls neuronal excitability. This is NALCN channel auxiliary factor 2 (Nalf2) from Mus musculus (Mouse).